A 343-amino-acid chain; its full sequence is L-threonine 3-dehydrogenase (343 aa).

A Zn(2+)-binding site is contributed by Cys38. Active-site charge relay system residues include Thr40 and His43. Positions 63, 64, 93, 96, 99, and 107 each coordinate Zn(2+). Residues Ile175, Asp195, Arg200, 262–264, and 286–287 contribute to the NAD(+) site; these read LGI and IY.

Belongs to the zinc-containing alcohol dehydrogenase family. Homotetramer. It depends on Zn(2+) as a cofactor.

Its subcellular location is the cytoplasm. The enzyme catalyses L-threonine + NAD(+) = (2S)-2-amino-3-oxobutanoate + NADH + H(+). Its pathway is amino-acid degradation; L-threonine degradation via oxydo-reductase pathway; glycine from L-threonine: step 1/2. In terms of biological role, catalyzes the NAD(+)-dependent oxidation of L-threonine to 2-amino-3-ketobutyrate. The chain is L-threonine 3-dehydrogenase from Burkholderia thailandensis (strain ATCC 700388 / DSM 13276 / CCUG 48851 / CIP 106301 / E264).